Here is a 225-residue protein sequence, read N- to C-terminus: Futalosine hydrolase (225 aa).

It belongs to the PNP/UDP phosphorylase family. Futalosine hydrolase subfamily. Homotetramer.

The enzyme catalyses futalosine + H2O = dehypoxanthine futalosine + hypoxanthine. Its pathway is quinol/quinone metabolism; menaquinone biosynthesis. Its activity is regulated as follows. No enhancing of inhibitory effects are observed with divalent metal ions. Slightly inhibited by hypoxanthine. Catalyzes the hydrolysis of futalosine (FL) to dehypoxanthine futalosine (DHFL) and hypoxanthine, a step in the biosynthesis of menaquinone (MK, vitamin K2). Is highly specific to futalosine since it does not accept aminodeoxyfutalosine (AFL), or any structurally related nucleotides and nucleosides as substrate. This Thermus thermophilus (strain ATCC 27634 / DSM 579 / HB8) protein is Futalosine hydrolase.